A 225-amino-acid chain; its full sequence is Endonuclease V (225 aa).

Positions 43 and 110 each coordinate Mg(2+). 2 interaction with target DNA regions span residues 139–141 (KSR) and 214–221 (HIYTQRLK).

It belongs to the endonuclease V family. It depends on Mg(2+) as a cofactor.

It is found in the cytoplasm. The enzyme catalyses Endonucleolytic cleavage at apurinic or apyrimidinic sites to products with a 5'-phosphate.. DNA repair enzyme involved in the repair of deaminated bases. Selectively cleaves double-stranded DNA at the second phosphodiester bond 3' to a deoxyinosine leaving behind the intact lesion on the nicked DNA. In vitro, can also cleave single-stranded substrates with inosine, double-stranded DNA with apurinic sites, or DNA sites with uracil or a mismatched base. When present in molar excess, two protein molecules can bind to the same DNA substrate and effect cleavage of both strands (in vitro). The chain is Endonuclease V from Thermotoga maritima (strain ATCC 43589 / DSM 3109 / JCM 10099 / NBRC 100826 / MSB8).